The primary structure comprises 2207 residues: Genome polyprotein (2207 aa).

The N-myristoyl glycine; by host moiety is linked to residue Gly-2. At 2–1518 the chain is on the cytoplasmic side; the sequence is GAQVSSQKVG…NINRAMTILQ (1517 aa). Residues 579–599 form an amphipathic alpha-helix region; that stretch reads GLGDLIEGVVEGVTRNALTPL. Polar residues predominate over residues 597 to 613; it reads TPLTPANNLPDTQSSGP. Disordered regions lie at residues 597-620 and 628-647; these read TPLT…KETP and GATN…VIQK. Catalysis depends on for protease 2A activity residues His-899 and Asp-917. The Zn(2+) site is built by Cys-934 and Cys-936. The active-site For protease 2A activity is Cys-988. Zn(2+) is bound by residues Cys-994 and His-996. Residues 1126 to 1198 form a membrane-binding region; the sequence is GDSWLKKFTE…HQSCPSQEHQ (73 aa). The segment at 1126 to 1264 is oligomerization; it reads GDSWLKKFTE…SPGTGKSVAT (139 aa). The RNA-binding stretch occupies residues 1147–1151; sequence SNKIS. The SF3 helicase domain occupies 1230–1386; sequence EHTINNYVQF…SEYSRDGKLN (157 aa). Position 1254 to 1261 (1254 to 1261) interacts with ATP; sequence GSPGTGKS. Zn(2+) is bound by residues Cys-1394, Cys-1397, Cys-1406, and Cys-1411. The C4-type zinc finger occupies 1394–1411; the sequence is CKNCHHPANFKRCCPLVC. Positions 1438–1445 are RNA-binding; sequence ERNRRSSI. The interval 1449–1454 is oligomerization; that stretch reads MEALFQ. An intramembrane segment occupies 1519 to 1534; that stretch reads AVTTFAAVAGVVYVMY. Topologically, residues 1535 to 2207 are cytoplasmic; that stretch reads KLFAGHQGAY…TLYRRWLDSF (673 aa). O-(5'-phospho-RNA)-tyrosine is present on Tyr-1544. The region spanning 1564–1742 is the Peptidase C3 domain; the sequence is GPGFDYAVAM…FAAALKRSYF (179 aa). Active-site for protease 3C activity residues include His-1603, Glu-1634, and Cys-1710. Residues 1973–2088 form the RdRp catalytic domain; it reads EKLFAFDYTG…SYPHEVDASL (116 aa). The Mg(2+) site is built by Asp-1979 and Asp-2074.

It belongs to the picornaviruses polyprotein family. Interacts with capsid protein VP1 and capsid protein VP3 to form heterotrimeric protomers. In terms of assembly, interacts with capsid protein VP0, and capsid protein VP3 to form heterotrimeric protomers. Interacts with human PVR. Five protomers subsequently associate to form pentamers which serve as building blocks for the capsid. Interacts with capsid protein VP2, capsid protein VP3 and capsid protein VP4 following cleavage of capsid protein VP0. As to quaternary structure, interacts with capsid protein VP1 and capsid protein VP3 in the mature capsid. Interacts with capsid protein VP0 and capsid protein VP1 to form heterotrimeric protomers. Five protomers subsequently associate to form pentamers which serve as building blocks for the capsid. Interacts with capsid protein VP4 in the mature capsid. Interacts with protein 2C; this interaction may be important for virion morphogenesis. In terms of assembly, interacts with capsid protein VP1 and capsid protein VP3. As to quaternary structure, homodimer. Homohexamer; forms a hexameric ring structure with 6-fold symmetry characteristic of AAA+ ATPases. Interacts (via N-terminus) with host RTN3 (via reticulon domain); this interaction is important for viral replication. Interacts with capsid protein VP3; this interaction may be important for virion morphogenesis. In terms of assembly, interacts with protein 3CD. As to quaternary structure, homodimer. Interacts with host GBF1. Interacts (via GOLD domain) with host ACBD3 (via GOLD domain); this interaction allows the formation of a viral protein 3A/ACBD3 heterotetramer with a 2:2 stoichiometry, which will stimulate the recruitment of host PI4KB in order to synthesize PI4P at the viral RNA replication sites. Interacts with RNA-directed RNA polymerase. In terms of assembly, interacts with protein 3AB and with RNA-directed RNA polymerase. As to quaternary structure, interacts with Viral protein genome-linked and with protein 3CD. Requires Mg(2+) as cofactor. In terms of processing, specific enzymatic cleavages in vivo by the viral proteases yield processing intermediates and the mature proteins. Myristoylation is required for the formation of pentamers during virus assembly. Further assembly of 12 pentamers and a molecule of genomic RNA generates the provirion. Post-translationally, during virion maturation, immature virions are rendered infectious following cleavage of VP0 into VP4 and VP2. This maturation seems to be an autocatalytic event triggered by the presence of RNA in the capsid and it is followed by a conformational change infectious virion. In terms of processing, myristoylation is required during RNA encapsidation and formation of the mature virus particle. VPg is uridylylated by the polymerase into VPg-pUpU. This acts as a nucleotide-peptide primer for the genomic RNA replication.

Its subcellular location is the virion. It localises to the host cytoplasm. It is found in the host cytoplasmic vesicle membrane. The protein resides in the host nucleus. It catalyses the reaction a ribonucleoside 5'-triphosphate + H2O = a ribonucleoside 5'-diphosphate + phosphate + H(+). It carries out the reaction Selective cleavage of Tyr-|-Gly bond in the picornavirus polyprotein.. The catalysed reaction is RNA(n) + a ribonucleoside 5'-triphosphate = RNA(n+1) + diphosphate. The enzyme catalyses Selective cleavage of Gln-|-Gly bond in the poliovirus polyprotein. In other picornavirus reactions Glu may be substituted for Gln, and Ser or Thr for Gly.. Its activity is regulated as follows. Replication or transcription is subject to high level of random mutations by the nucleotide analog ribavirin. Functionally, forms an icosahedral capsid of pseudo T=3 symmetry with capsid proteins VP2 and VP3. The capsid is 300 Angstroms in diameter, composed of 60 copies of each capsid protein and enclosing the viral positive strand RNA genome. Capsid protein VP1 mainly forms the vertices of the capsid. Capsid protein VP1 interacts with host cell receptor PVR to provide virion attachment to target host cells. This attachment induces virion internalization predominantly through clathrin- and caveolin-independent endocytosis in Hela cells and through caveolin-mediated endocytosis in brain microvascular endothelial cells. Tyrosine kinases are probably involved in the entry process. Virus binding to PVR induces increased junctional permeability and rearrangement of junctional proteins. Modulation of endothelial tight junctions, as well as cytolytic infection of endothelial cells themselves, may result in loss of endothelial integrity which may help the virus to reach the CNS. After binding to its receptor, the capsid undergoes conformational changes. Capsid protein VP1 N-terminus (that contains an amphipathic alpha-helix) and capsid protein VP4 are externalized. Together, they shape a pore in the host membrane through which viral genome is translocated to host cell cytoplasm. Its function is as follows. Forms an icosahedral capsid of pseudo T=3 symmetry with capsid proteins VP2 and VP3. The capsid is 300 Angstroms in diameter, composed of 60 copies of each capsid protein and enclosing the viral positive strand RNA genome. Lies on the inner surface of the capsid shell. After binding to the host receptor, the capsid undergoes conformational changes. Capsid protein VP4 is released, Capsid protein VP1 N-terminus is externalized, and together, they shape a pore in the host membrane through which the viral genome is translocated into the host cell cytoplasm. In terms of biological role, component of immature procapsids, which is cleaved into capsid proteins VP4 and VP2 after maturation. Allows the capsid to remain inactive before the maturation step. Functionally, cysteine protease that cleaves viral polyprotein and specific host proteins. It is responsible for the autocatalytic cleavage between the P1 and P2 regions, which is the first cleavage occurring in the polyprotein. Also cleaves the host translation initiation factor EIF4G1, in order to shut down the capped cellular mRNA translation. Inhibits the host nucleus-cytoplasm protein and RNA trafficking by cleaving host members of the nuclear pores including NUP98, NUP62 and NUP153. Counteracts stress granule formation probably by antagonizing its assembly or promoting its dissassembly. Cleaves and inhibits host IFIH1/MDA5, thereby inhibiting the type-I IFN production and the establishment of the antiviral state. Cleaves and inhibits host MAVS, thereby inhibiting the type-I IFN production and the establishment of the antiviral state. Its function is as follows. Plays an essential role in the virus replication cycle by acting as a viroporin. Creates a pore in the host endoplasmic reticulum and as a consequence releases Ca2+ in the cytoplasm of infected cell. In turn, high levels of cytoplasmic calcium may trigger membrane trafficking and transport of viral ER-associated proteins to viroplasms, sites of viral genome replication. Induces and associates with structural rearrangements of intracellular membranes. Displays RNA-binding, nucleotide binding and NTPase activities. May play a role in virion morphogenesis and viral RNA encapsidation by interacting with the capsid protein VP3. In terms of biological role, localizes the viral replication complex to the surface of membranous vesicles. Together with protein 3CD binds the Cis-Active RNA Element (CRE) which is involved in RNA synthesis initiation. Acts as a cofactor to stimulate the activity of 3D polymerase, maybe through a nucleid acid chaperone activity. Functionally, localizes the viral replication complex to the surface of membranous vesicles. It inhibits host cell endoplasmic reticulum-to-Golgi apparatus transport and causes the disassembly of the Golgi complex, possibly through GBF1 interaction. This would result in depletion of MHC, trail receptors and IFN receptors at the host cell surface. Plays an essential role in viral RNA replication by recruiting ACBD3 and PI4KB at the viral replication sites, thereby allowing the formation of the rearranged membranous structures where viral replication takes place. Its function is as follows. Acts as a primer for viral RNA replication and remains covalently bound to viral genomic RNA. VPg is uridylylated prior to priming replication into VPg-pUpU. The oriI viral genomic sequence may act as a template for this. The VPg-pUpU is then used as primer on the genomic RNA poly(A) by the RNA-dependent RNA polymerase to replicate the viral genome. During genome replication, the VPg-RNA linkage is removed by the host TDP2, thereby accelerating replication. During the late stage of the replication cycle, host TDP2 is excluded from sites of viral RNA synthesis and encapsidation, allowing for the generation of progeny virions. Involved in the viral replication complex and viral polypeptide maturation. It exhibits protease activity with a specificity and catalytic efficiency that is different from protease 3C. Protein 3CD lacks polymerase activity. Protein 3CD binds to the 5'UTR of the viral genome. In terms of biological role, major viral protease that mediates proteolytic processing of the polyprotein. Cleaves host EIF5B, contributing to host translation shutoff. Also cleaves host PABPC1, contributing to host translation shutoff. Cleaves host RIGI and thus contributes to the inhibition of type I interferon production. Cleaves host NLRP1, triggers host N-glycine-mediated degradation of the autoinhibitory NLRP1 N-terminal fragment. Inhibits the integrated stress response (ISR) in the infected cell by cleaving host G3BP1. Stress granule formation is thus inhibited, which allows protein synthesis and viral replication. Functionally, replicates the viral genomic RNA on the surface of intracellular membranes. May form linear arrays of subunits that propagate along a strong head-to-tail interaction called interface-I. Covalently attaches UMP to a tyrosine of VPg, which is used to prime RNA synthesis. The positive stranded RNA genome is first replicated at virus induced membranous vesicles, creating a dsRNA genomic replication form. This dsRNA is then used as template to synthesize positive stranded RNA genomes. ss(+)RNA genomes are either translated, replicated or encapsidated. In Homo sapiens (Human), this protein is Genome polyprotein.